Here is a 117-residue protein sequence, read N- to C-terminus: Minor capsid protein VP2 (117 aa).

The protein belongs to the lagovirus VP2 protein family. In terms of assembly, homooligomer. The portal-like structure consists in 12 copies of VP2. Interacts with capsid protein VP1.

The protein resides in the virion. It localises to the host cytoplasm. Its function is as follows. Minor structural protein that forms a portal-like structure at a unique three-fold axis of symmetry, following binding to the host receptor. The channel formed by VP2 may allow the delivery of the viral genome through the host endosomal membrane. The chain is Minor capsid protein VP2 from Oryctolagus cuniculus (Rabbit).